The following is a 145-amino-acid chain: MRVVIQRVNKAQVTIDNEVVGKIKRGFLLLVGLREGDELDQVKKAASKIAKMRIFEDENGKTNLSLKDVNGEILSVSQFTLLANTKKGNRPSFVEAMRPPKSKELWEDFNQELENKDFHVETGEFGADMQVSLENDGPFTIVLDI.

The short motif at 137–138 (GP) is the Gly-cisPro motif, important for rejection of L-amino acids element.

The protein belongs to the DTD family. In terms of assembly, homodimer.

It localises to the cytoplasm. The catalysed reaction is glycyl-tRNA(Ala) + H2O = tRNA(Ala) + glycine + H(+). It catalyses the reaction a D-aminoacyl-tRNA + H2O = a tRNA + a D-alpha-amino acid + H(+). An aminoacyl-tRNA editing enzyme that deacylates mischarged D-aminoacyl-tRNAs. Also deacylates mischarged glycyl-tRNA(Ala), protecting cells against glycine mischarging by AlaRS. Acts via tRNA-based rather than protein-based catalysis; rejects L-amino acids rather than detecting D-amino acids in the active site. By recycling D-aminoacyl-tRNA to D-amino acids and free tRNA molecules, this enzyme counteracts the toxicity associated with the formation of D-aminoacyl-tRNA entities in vivo and helps enforce protein L-homochirality. This is D-aminoacyl-tRNA deacylase from Lactobacillus gasseri (strain ATCC 33323 / DSM 20243 / BCRC 14619 / CIP 102991 / JCM 1131 / KCTC 3163 / NCIMB 11718 / NCTC 13722 / AM63).